Reading from the N-terminus, the 1123-residue chain is Inner tegument protein (1123 aa).

2 disordered regions span residues 1-27 (MADR…GPMQ) and 1047-1123 (RPLA…TSYQ). The segment at 568–1123 (WDITPTTPAT…PTDLPLTSYQ (556 aa)) is interaction with large tegument protein.

The protein belongs to the herpesviridae inner tegument protein family. As to quaternary structure, interacts (via C-terminus) with the large tegument protein/LTP (via N-terminus). Interacts with host DST. Interacts with host RIGI; this interaction inhibits RIGI activation. Interacts with host CGAS; this interaction inhibits host CGAS activation. Interacts with host TAOK3.

It localises to the virion tegument. Its subcellular location is the host cytoplasm. The protein resides in the host nucleus. The protein localises to the host Golgi apparatus. It is found in the host trans-Golgi network. It carries out the reaction L-asparaginyl-[protein] + H2O = L-aspartyl-[protein] + NH4(+). The enzyme catalyses L-glutaminyl-[protein] + H2O = L-glutamyl-[protein] + NH4(+). Its function is as follows. Plays an essential role in cytoplasmic secondary envelopment during viral egress. Interacts with the capsid via the large tegument protein/LTP and participates in its transport to the host trans-Golgi network (TGN) where secondary envelopment occurs. Modulates tegumentation and capsid accumulation at the viral assembly complex. Plays a role in microtubule-based retrograde axonal transport to promote neuroinvasion. Also plays a role in the inhibition of host immune response by acting as a viral deamidase. Deamidates host RIGI on two asparagines which becomes unable to sense viral dsRNA. In turn, its ability to trigger antiviral immune response and restrict viral replication is inhibited. Also deamidates a critical asparagine on host CGAS which abolishes cGAMP synthesis and downstream innate immune activation. The protein is Inner tegument protein (UL37) of Homo sapiens (Human).